Here is a 270-residue protein sequence, read N- to C-terminus: MTNPMQATRKIISITDQNVVHREDQVAREYPLTIYVNDREFATMVCTQADLEEMVIGFLGSEGLIRFYKQDVASLSIDESRGFAYVSLTKELPTEWQFYSKRMIGSCCGKSRQSFYFHNDAKTAKTSMSRTTMTPEQCFRLMEALQEQSVIFQQTGGVHNAALATPEQMLISRTDIGRHNALDKLYGYCLMNGVPVRDKVLLFSGRISSEVLLKAAKIGVGIMLSKSAPTELALTMAEELNITTAGFIRDGRMNIYTVPERILTPKKEVQ.

Cysteine 108 functions as the Cysteine persulfide intermediate in the catalytic mechanism. 247–252 (FIRDGR) serves as a coordination point for Mo-bis(molybdopterin guanine dinucleotide).

Belongs to the FdhD family.

It is found in the cytoplasm. Its function is as follows. Required for formate dehydrogenase (FDH) activity. Acts as a sulfur carrier protein that transfers sulfur from IscS to the molybdenum cofactor prior to its insertion into FDH. The sequence is that of Sulfur carrier protein FdhD from Halalkalibacterium halodurans (strain ATCC BAA-125 / DSM 18197 / FERM 7344 / JCM 9153 / C-125) (Bacillus halodurans).